A 96-amino-acid polypeptide reads, in one-letter code: Neurotoxin beta-KTx 31.1 (96 aa).

The signal sequence occupies residues 1–21 (MQAKRTILLLLLLGMVALSSC). A propeptide spanning residues 22 to 29 (GLREKHVQ) is cleaved from the precursor. The region spanning 56–93 (QYGCPIIKDYCSFHCNDLEKHEGYCHGTKCKCNIPNQY) is the BetaSPN-type CS-alpha/beta domain. Intrachain disulfides connect Cys59–Cys80, Cys66–Cys85, and Cys70–Cys87.

Belongs to the long chain scorpion toxin family. Class 1 subfamily. In terms of tissue distribution, expressed by the venom gland.

It is found in the secreted. In terms of biological role, inhibits voltage-gated potassium channel. The protein is Neurotoxin beta-KTx 31.1 of Lychas mucronatus (Chinese swimming scorpion).